We begin with the raw amino-acid sequence, 1384 residues long: RRP12-like protein (1384 aa).

Basic residues predominate over residues 1–13 (MGKFRSKLKRNGK). Residues 1–32 (MGKFRSKLKRNGKGKTWSRGESATSNPTQMKH) form a disordered region. The span at 19 to 29 (RGESATSNPTQ) shows a compositional bias: polar residues. Phosphoserine occurs at positions 82, 85, 96, 1094, 1095, 1117, and 1119. Disordered regions lie at residues 1082–1102 (LRKK…LVSG), 1114–1155 (LADS…IRED), and 1176–1384 (SAQT…KKYK). Acidic residues-rich tracts occupy residues 1090–1099 (AQEDSSDDEL) and 1114–1127 (LADS…DMDA). Over residues 1176 to 1191 (SAQTATPAQSQKTKAQ) the composition is skewed to polar residues. A phosphoserine mark is found at Ser1221, Ser1225, Ser1227, Ser1230, Ser1250, and Ser1251. Composition is skewed to polar residues over residues 1276-1285 (SGKTTASSRY) and 1297-1315 (TAGN…TSRP). Over residues 1321-1334 (GSKKAKGDMKKSGK) the composition is skewed to basic and acidic residues. Positions 1348 to 1362 (LNKRKRSMNSRKFKS) are enriched in basic residues. Residues 1369-1378 (AENGGAGGGR) are compositionally biased toward gly residues.

It belongs to the RRP12 family.

Its subcellular location is the nucleus. The polypeptide is RRP12-like protein (Drosophila melanogaster (Fruit fly)).